We begin with the raw amino-acid sequence, 881 residues long: Serine/threonine-protein kinase/endoribonuclease IRE1b (881 aa).

The signal sequence occupies residues 1–21 (MRGSALLDLILFLLVSPLAHS). The Lumenal portion of the chain corresponds to 22-357 (FKGSEISKFY…KQAGFASKFS (336 aa)). N115 carries an N-linked (GlcNAc...) asparagine glycan. A helical membrane pass occupies residues 358-378 (GLIVLIFGFCVTMLSVCGLFF). Residues 379-881 (YRLRQSIRIK…FFKYSKTTVF (503 aa)) are Cytoplasmic-facing. The 286-residue stretch at 459–744 (FVSNKEIAKG…AQDVMHHPLF (286 aa)) folds into the Protein kinase domain. Residues 465–473 (IAKGSNGTV) and K487 contribute to the ATP site. Positions 481 to 502 (GRLVAVKRLVQSHHDVAQKEIL) are ATP selon article. The Proton acceptor role is filled by D608. A disordered region spans residues 642–661 (LTRNSTGLGSGSSGWQAPEQ). In terms of domain architecture, KEN spans 747-878 (SDMRLSFLRD…EEFFFKYSKT (132 aa)).

The protein belongs to the protein kinase superfamily. Ser/Thr protein kinase family. Homodimer; disulfide-linked. Dimer formation is driven by hydrophobic interactions within the N-terminal luminal domains and stabilized by disulfide bridges. Mg(2+) is required as a cofactor. Post-translationally, autophosphorylated. As to expression, ubiquitous. Detected in the apical meristem, at leaf margins where vascular bundles end, in the anthers before pollen is formed and in the ovules at a very early stage of development. There is no expression in more mature embryos. Also strongly expressed in the cotyledons immediately after germination but not later on.

The protein localises to the endoplasmic reticulum membrane. The enzyme catalyses L-seryl-[protein] + ATP = O-phospho-L-seryl-[protein] + ADP + H(+). It catalyses the reaction L-threonyl-[protein] + ATP = O-phospho-L-threonyl-[protein] + ADP + H(+). With respect to regulation, the kinase domain is activated by trans-autophosphorylation. Kinase activity is required for activation of the endoribonuclease domain. Functionally, senses unfolded proteins in the lumen of the endoplasmic reticulum via its N-terminal domain which leads to enzyme auto-activation. The active endoribonuclease domain splices bZIP60 mRNA to generate a new C-terminus, converting it into a potent unfolded-protein response transcriptional activator which then induces transcription of UPR target genes. Involved in organ growth regulation. Plays a role in plant immunity and abiotic stress responses. Required for ER stress-induced autophagy. The protein is Serine/threonine-protein kinase/endoribonuclease IRE1b (IRE1B) of Arabidopsis thaliana (Mouse-ear cress).